The chain runs to 701 residues: Transcription factor PDR8 (701 aa).

Positions 1-22 are disordered; that stretch reads MDGSHFPMKSTTGEPVSSGKKG. Residues 31–59 constitute a DNA-binding region (zn(2)-C6 fungal-type); that stretch reads CAFCRKRKLKCSQARPMCQQCVIRKLPQC.

It localises to the cytoplasm. Its subcellular location is the nucleus. Up-regulates the transcription of the genes for ATP-binding cassette (ABC) transporters YOR1 and PDR15, for major facilitator superfamily transporter AZR1, for pleiotropic drug resistance SNG1, for alpha-glucosidase YJL216C and for YLL056C. In Saccharomyces cerevisiae (strain ATCC 204508 / S288c) (Baker's yeast), this protein is Transcription factor PDR8 (PDR8).